A 333-amino-acid chain; its full sequence is MQELRLVLILVGALAIAALLFHGLWTSRKETSSKFGKKVDIDFDSDVDDEQAAPMRGFDQPKEDVVVQKERKEPAFAREEVPTSDDPLFEGTVSSESNKFTQQEKPTVQQAQPQPQPQPVVQQVQEPTVGRIEPEAKPVAAPVKREEPTISFSAIDDEVLTQPEPVQAKVDIPETSTYLEPEIIIEEPEPEPEPELEEDVIVINVHGMGSDRFSGNRLFNSLEQNGLVFGDMAIYHRHSDLSGAGKVLFSVANMVSPGHFQVPEGEEFSTPGISFFLPLPCYGDAEHNFKLMLQTAQMISSELGGNVLDEKRDMLTPNKIDEYKQRVKVFCRK.

At Met-1–Arg-5 the chain is on the periplasmic side. Residues Leu-6–Thr-26 traverse the membrane as a helical segment. At Ser-27 to Lys-333 the chain is on the cytoplasmic side. Positions Lys-72–Val-81 are enriched in basic and acidic residues. Residues Lys-72 to Pro-119 form a disordered region. Residues Thr-92–Thr-107 are compositionally biased toward polar residues. Low complexity predominate over residues Val-108 to Pro-119.

Belongs to the ZipA family. Interacts with FtsZ via their C-terminal domains.

Its subcellular location is the cell inner membrane. Functionally, essential cell division protein that stabilizes the FtsZ protofilaments by cross-linking them and that serves as a cytoplasmic membrane anchor for the Z ring. Also required for the recruitment to the septal ring of downstream cell division proteins. The chain is Cell division protein ZipA from Aliivibrio fischeri (strain ATCC 700601 / ES114) (Vibrio fischeri).